Consider the following 428-residue polypeptide: Histidine--tRNA ligase (428 aa).

It belongs to the class-II aminoacyl-tRNA synthetase family. In terms of assembly, homodimer.

It localises to the cytoplasm. It carries out the reaction tRNA(His) + L-histidine + ATP = L-histidyl-tRNA(His) + AMP + diphosphate + H(+). In Bordetella pertussis (strain Tohama I / ATCC BAA-589 / NCTC 13251), this protein is Histidine--tRNA ligase.